A 250-amino-acid polypeptide reads, in one-letter code: Ubiquinone/menaquinone biosynthesis C-methyltransferase UbiE (250 aa).

S-adenosyl-L-methionine-binding positions include Thr74, Asp94, 122–123 (DA), and Ser139.

The protein belongs to the class I-like SAM-binding methyltransferase superfamily. MenG/UbiE family.

The catalysed reaction is a 2-demethylmenaquinol + S-adenosyl-L-methionine = a menaquinol + S-adenosyl-L-homocysteine + H(+). It carries out the reaction a 2-methoxy-6-(all-trans-polyprenyl)benzene-1,4-diol + S-adenosyl-L-methionine = a 5-methoxy-2-methyl-3-(all-trans-polyprenyl)benzene-1,4-diol + S-adenosyl-L-homocysteine + H(+). The protein operates within quinol/quinone metabolism; menaquinone biosynthesis; menaquinol from 1,4-dihydroxy-2-naphthoate: step 2/2. It functions in the pathway cofactor biosynthesis; ubiquinone biosynthesis. Functionally, methyltransferase required for the conversion of demethylmenaquinol (DMKH2) to menaquinol (MKH2) and the conversion of 2-polyprenyl-6-methoxy-1,4-benzoquinol (DDMQH2) to 2-polyprenyl-3-methyl-6-methoxy-1,4-benzoquinol (DMQH2). The protein is Ubiquinone/menaquinone biosynthesis C-methyltransferase UbiE of Paracoccus denitrificans (strain Pd 1222).